Consider the following 429-residue polypeptide: UDP-N-acetylglucosamine 1-carboxyvinyltransferase (429 aa).

A phosphoenolpyruvate-binding site is contributed by 22–23 (KN). UDP-N-acetyl-alpha-D-glucosamine is bound at residue Arg102. The active-site Proton donor is Cys126. Position 126 is a 2-(S-cysteinyl)pyruvic acid O-phosphothioketal (Cys126). UDP-N-acetyl-alpha-D-glucosamine is bound by residues 131–135 (RPVDL), Asp316, and Ile338.

Belongs to the EPSP synthase family. MurA subfamily.

It is found in the cytoplasm. It carries out the reaction phosphoenolpyruvate + UDP-N-acetyl-alpha-D-glucosamine = UDP-N-acetyl-3-O-(1-carboxyvinyl)-alpha-D-glucosamine + phosphate. Its pathway is cell wall biogenesis; peptidoglycan biosynthesis. In terms of biological role, cell wall formation. Adds enolpyruvyl to UDP-N-acetylglucosamine. This Rhodopseudomonas palustris (strain HaA2) protein is UDP-N-acetylglucosamine 1-carboxyvinyltransferase.